A 143-amino-acid chain; its full sequence is MPTPSMEDYLERIYMLIEEKGYARVSDIAEALEVHPSSVTKMVQKLDKSDYLVYERYRGLVLTAKGNKIGKRLVYRHELLEDFMKIIGVDDTHIYKDVEGIEHHISWDAIDRIGDLVQYFQENQTRIDDLREIQKRNDFPEDE.

One can recognise an HTH dtxR-type domain in the interval 1 to 63; the sequence is MPTPSMEDYL…YERYRGLVLT (63 aa). Residues Asp-8, Glu-11, His-77, Glu-99, Glu-102, and His-103 each contribute to the Mn(2+) site.

Belongs to the DtxR/MntR family. In terms of assembly, homodimer.

It is found in the cytoplasm. Its activity is regulated as follows. DNA binding is strongly activated by Mn(2+). In terms of biological role, central regulator of manganese homeostasis. This chain is HTH-type transcriptional regulator MntR, found in Shouchella clausii (strain KSM-K16) (Alkalihalobacillus clausii).